A 514-amino-acid polypeptide reads, in one-letter code: tRNA-2-methylthio-N(6)-dimethylallyladenosine synthase (514 aa).

A disordered region spans residues Met-1–Ala-21. The 119-residue stretch at Arg-68–Leu-186 folds into the MTTase N-terminal domain. The [4Fe-4S] cluster site is built by Cys-77, Cys-113, Cys-147, Cys-223, Cys-227, and Cys-230. Positions Arg-209–Ala-440 constitute a Radical SAM core domain. Residues Ser-442 to Lys-505 form the TRAM domain.

The protein belongs to the methylthiotransferase family. MiaB subfamily. In terms of assembly, monomer. The cofactor is [4Fe-4S] cluster.

Its subcellular location is the cytoplasm. It carries out the reaction N(6)-dimethylallyladenosine(37) in tRNA + (sulfur carrier)-SH + AH2 + 2 S-adenosyl-L-methionine = 2-methylsulfanyl-N(6)-dimethylallyladenosine(37) in tRNA + (sulfur carrier)-H + 5'-deoxyadenosine + L-methionine + A + S-adenosyl-L-homocysteine + 2 H(+). Catalyzes the methylthiolation of N6-(dimethylallyl)adenosine (i(6)A), leading to the formation of 2-methylthio-N6-(dimethylallyl)adenosine (ms(2)i(6)A) at position 37 in tRNAs that read codons beginning with uridine. The chain is tRNA-2-methylthio-N(6)-dimethylallyladenosine synthase from Staphylococcus aureus (strain N315).